Consider the following 266-residue polypeptide: Glutamate racemase (266 aa).

Substrate contacts are provided by residues 9–10 (DS) and 41–42 (YG). Residue Cys-72 is the Proton donor/acceptor of the active site. 73–74 (NT) serves as a coordination point for substrate. The active-site Proton donor/acceptor is Cys-184. 185 to 186 (TH) is a substrate binding site.

This sequence belongs to the aspartate/glutamate racemases family.

It carries out the reaction L-glutamate = D-glutamate. The protein operates within cell wall biogenesis; peptidoglycan biosynthesis. In terms of biological role, provides the (R)-glutamate required for cell wall biosynthesis. The sequence is that of Glutamate racemase from Staphylococcus carnosus (strain TM300).